The sequence spans 114 residues: Monothiol glutaredoxin-S8 (114 aa).

Residues 1–113 form the Glutaredoxin domain; the sequence is MDRVTRLASQ…PLLRDAGALW (113 aa). Residue C21 coordinates [2Fe-2S] cluster.

It belongs to the glutaredoxin family. CC-type subfamily.

The protein resides in the cytoplasm. Its function is as follows. May only reduce GSH-thiol disulfides, but not protein disulfides. This Oryza sativa subsp. japonica (Rice) protein is Monothiol glutaredoxin-S8 (GRXS8).